Consider the following 343-residue polypeptide: UDP-3-O-(3-hydroxymyristoyl)glucosamine N-acyltransferase (343 aa).

Histidine 239 (proton acceptor) is an active-site residue.

Belongs to the transferase hexapeptide repeat family. LpxD subfamily. As to quaternary structure, homotrimer.

It carries out the reaction a UDP-3-O-[(3R)-3-hydroxyacyl]-alpha-D-glucosamine + a (3R)-hydroxyacyl-[ACP] = a UDP-2-N,3-O-bis[(3R)-3-hydroxyacyl]-alpha-D-glucosamine + holo-[ACP] + H(+). The enzyme catalyses UDP-3-O-[(3R)-3-hydroxytetradecanoyl]-alpha-D-glucosamine + (3R)-hydroxytetradecanoyl-[ACP] = UDP-2-N,3-O-bis[(3R)-3-hydroxytetradecanoyl]-alpha-D-glucosamine + holo-[ACP] + H(+). The protein operates within glycolipid biosynthesis; lipid IV(A) biosynthesis; lipid IV(A) from (3R)-3-hydroxytetradecanoyl-[acyl-carrier-protein] and UDP-N-acetyl-alpha-D-glucosamine: step 3/6. In terms of biological role, catalyzes the N-acylation of UDP-3-O-(hydroxytetradecanoyl)glucosamine using 3-hydroxytetradecanoyl-ACP as the acyl donor. Is involved in the biosynthesis of lipid A, a phosphorylated glycolipid that anchors the lipopolysaccharide to the outer membrane of the cell. The sequence is that of UDP-3-O-(3-hydroxymyristoyl)glucosamine N-acyltransferase from Blochmanniella pennsylvanica (strain BPEN).